Consider the following 483-residue polypeptide: MNYFPIFANLAGRPVLVVGGGAVAARKISLLLKAGAEVRVAAKHLNAELSALAAENKILWLAEEFRAEHIRTVFLIIAASSDQALNRRVFHLAESCQKPVNVVDDRDHCSFIFPSVIDRNPVQIAVSSSGSAPVLARLLRERLEALLPPSLGDMAEISGRWRDAVKGKLKSVTERRRFWEKQFNGRFAALVKNRQNTLAERELAGQLEQSRQNDQGGSVSLVGAGPGDAGLLTLKGLQEIQQADVVLYDALVSDGILSLVRRDAERIFVGKRARGERTPQEDTNALMVRLAREGRRVVRLKGGDPFVFGRGGEELETLARHQIPFSVVPGITAAVGATAYAGIPLTHRDYAQSAVFVTGHRKADAPDIEWQTLARSRQTLVIYMGALKAALIAERLQQHGRSPDTPAAVISQGTLPAQKTATGTLANLAELAETAPNPALIVIGEVVGLHEKLAWFGENGEGENRVGQTYPALGGLNAGQRAA.

A precorrin-2 dehydrogenase /sirohydrochlorin ferrochelatase region spans residues 1–203 (MNYFPIFANL…RQNTLAEREL (203 aa)). NAD(+) contacts are provided by residues 22–23 (AV) and 43–44 (KH). The residue at position 128 (S128) is a Phosphoserine. The segment at 217-483 (GSVSLVGAGP…GGLNAGQRAA (267 aa)) is uroporphyrinogen-III C-methyltransferase. P226 is an S-adenosyl-L-methionine binding site. Residue D249 is the Proton acceptor of the active site. The active-site Proton donor is K271. S-adenosyl-L-methionine-binding positions include 302–304 (GGD), V307, 332–333 (TA), M384, and G413.

It in the N-terminal section; belongs to the precorrin-2 dehydrogenase / sirohydrochlorin ferrochelatase family. In the C-terminal section; belongs to the precorrin methyltransferase family.

It carries out the reaction uroporphyrinogen III + 2 S-adenosyl-L-methionine = precorrin-2 + 2 S-adenosyl-L-homocysteine + H(+). The enzyme catalyses precorrin-2 + NAD(+) = sirohydrochlorin + NADH + 2 H(+). It catalyses the reaction siroheme + 2 H(+) = sirohydrochlorin + Fe(2+). It participates in cofactor biosynthesis; adenosylcobalamin biosynthesis; precorrin-2 from uroporphyrinogen III: step 1/1. It functions in the pathway cofactor biosynthesis; adenosylcobalamin biosynthesis; sirohydrochlorin from precorrin-2: step 1/1. Its pathway is porphyrin-containing compound metabolism; siroheme biosynthesis; precorrin-2 from uroporphyrinogen III: step 1/1. The protein operates within porphyrin-containing compound metabolism; siroheme biosynthesis; siroheme from sirohydrochlorin: step 1/1. It participates in porphyrin-containing compound metabolism; siroheme biosynthesis; sirohydrochlorin from precorrin-2: step 1/1. Its function is as follows. Multifunctional enzyme that catalyzes the SAM-dependent methylations of uroporphyrinogen III at position C-2 and C-7 to form precorrin-2 via precorrin-1. Then it catalyzes the NAD-dependent ring dehydrogenation of precorrin-2 to yield sirohydrochlorin. Finally, it catalyzes the ferrochelation of sirohydrochlorin to yield siroheme. In Neisseria meningitidis serogroup B (strain ATCC BAA-335 / MC58), this protein is Siroheme synthase.